Consider the following 61-residue polypeptide: Photosystem II reaction center protein K (61 aa).

A propeptide spanning residues 1 to 24 (MPNIFSLICICLNSALQPSGFFFA) is cleaved from the precursor. A helical transmembrane segment spans residues 36–56 (IVDFMPVIPVLFFLLAFVWQA).

The protein belongs to the PsbK family. In terms of assembly, PSII is composed of 1 copy each of membrane proteins PsbA, PsbB, PsbC, PsbD, PsbE, PsbF, PsbH, PsbI, PsbJ, PsbK, PsbL, PsbM, PsbT, PsbX, PsbY, PsbZ, Psb30/Ycf12, at least 3 peripheral proteins of the oxygen-evolving complex and a large number of cofactors. It forms dimeric complexes.

It is found in the plastid. Its subcellular location is the chloroplast thylakoid membrane. Functionally, one of the components of the core complex of photosystem II (PSII). PSII is a light-driven water:plastoquinone oxidoreductase that uses light energy to abstract electrons from H(2)O, generating O(2) and a proton gradient subsequently used for ATP formation. It consists of a core antenna complex that captures photons, and an electron transfer chain that converts photonic excitation into a charge separation. This is Photosystem II reaction center protein K from Nymphaea alba (White water-lily).